A 179-amino-acid chain; its full sequence is NADH dehydrogenase [ubiquinone] 1 beta subcomplex subunit 9 (179 aa).

N-acetylalanine is present on Ala-2. The residue at position 85 (Ser-85) is a Phosphoserine. Positions Glu-136 to Asp-162 are disordered.

Belongs to the complex I LYR family. As to quaternary structure, mammalian complex I is composed of 45 different subunits.

Its subcellular location is the mitochondrion inner membrane. Accessory subunit of the mitochondrial membrane respiratory chain NADH dehydrogenase (Complex I), that is believed to be not involved in catalysis. Complex I functions in the transfer of electrons from NADH to the respiratory chain. The immediate electron acceptor for the enzyme is believed to be ubiquinone. This chain is NADH dehydrogenase [ubiquinone] 1 beta subcomplex subunit 9 (NDUFB9), found in Pan troglodytes (Chimpanzee).